The primary structure comprises 2009 residues: Protein Daple (2009 aa).

A Calponin-homology (CH) domain is found at 11–131 (LFLQSPLVTW…KVLLLVLGCA (121 aa)). The disordered stretch occupies residues 221–251 (QTQQPPSPGKFSSPDSTPSPTSSLSSEDKQH). Phosphoserine occurs at positions 227 and 239. A compositionally biased stretch (low complexity) spans 232 to 245 (SSPDSTPSPTSSLS). 2 coiled-coil regions span residues 247 to 425 (EDKQ…QKQS) and 456 to 1008 (ELNE…TQEG). Serine 486 carries the phosphoserine modification. Positions 1002 to 1036 (LRQTQEGGDKAQNALKRPPGKVTSHQEKEAWEPSH) are disordered. Residues 1025–1036 (SHQEKEAWEPSH) are compositionally biased toward basic and acidic residues. Residues 1190–1384 (HRNLELEHKE…LEEKIMDQYK (195 aa)) adopt a coiled-coil conformation. A compositionally biased stretch (basic and acidic residues) spans 1410 to 1419 (KEGSRERLKS). 2 disordered regions span residues 1410-1716 (KEGS…GAKM) and 1757-1787 (GMPSRQVQPPQSLSLGRPRQTTMTQNCHMPV). Residues 1430-1439 (PSDPASPSPS) show a composition bias toward low complexity. Residue serine 1435 is modified to Phosphoserine. Residues 1440-1449 (QALRSQTENP) show a composition bias toward polar residues. 2 stretches are compositionally biased toward low complexity: residues 1510–1524 (TFSTSATTAALSSST) and 1562–1581 (NSLESSRNASSNSSPLSLKG). A Phosphoserine modification is found at serine 1592. The GBA signature appears at 1652-1683 (HSASPSSEMVTLEEFLEESNRGGSPTHDTPSC). Residues 1681 to 1697 (PSCRDDLLSDYFRKAHD) are compositionally biased toward basic and acidic residues. Residues 1761-1783 (RQVQPPQSLSLGRPRQTTMTQNC) show a composition bias toward polar residues. Residue serine 1798 is modified to Phosphoserine. Residues 1808–2009 (SGPEACRPES…QTVWYEYGCV (202 aa)) form a disordered region. Positions 1866 to 1883 (RPLDTRRFSLAPPKEERL) are enriched in basic and acidic residues. Residues 1898 to 1911 (GCSSGSNPQIQHFS) show a composition bias toward polar residues. Gly residues predominate over residues 1943–1954 (TSEGDGGPGHGY). The segment covering 1981 to 1991 (SQGSSSKSTPA) has biased composition (polar residues). The PDZ-binding motif lies at 2006-2009 (YGCV). The DVL1-binding stretch occupies residues 2007–2009 (GCV).

It belongs to the CCDC88 family. In terms of assembly, homooligomer. Interacts with DVL1 (via PDZ domain); dissociates following initiation of non-canonical Wnt signaling. Interacts (via C-terminus) with ligand-activated Wnt receptor FZD7; competes with DVL1 for binding to FZD7 and displaces DVL1 from ligand-activated FZD7. Interacts (via GBA motif) with guanine nucleotide-binding protein G(i) alpha subunits GNAI1, GNAI2 and GNAI3 (inactive GDP-bound form); interacts with higher affinity with GNAI1 and GNAI3 than with GNAI2 and interaction leads to G(i) alpha subunit activation. Does not interact with GNAO1.

The protein resides in the cytoplasm. It localises to the cell junction. Functionally, required for activation of guanine nucleotide-binding proteins (G-proteins) during non-canonical Wnt signaling. Binds to ligand-activated Wnt receptor FZD7, displacing DVL1 from the FZD7 receptor and leading to inhibition of canonical Wnt signaling. Acts as a non-receptor guanine nucleotide exchange factor by also binding to guanine nucleotide-binding protein G(i) alpha (Gi-alpha) subunits, leading to their activation. Binding to Gi-alpha subunits displaces the beta and gamma subunits from the heterotrimeric G-protein complex, triggering non-canonical Wnt responses such as activation of RAC1 and PI3K-AKT signaling. Promotes apical constriction of cells via ARHGEF18. The protein is Protein Daple (Ccdc88c) of Mus musculus (Mouse).